The chain runs to 258 residues: E3 ubiquitin-protein ligase RNF170 (258 aa).

Over 1 to 24 (MAKYQGEVQSLKLDDDSVIEGVSD) the chain is Lumenal. Residues 25–45 (QVLVAVVVSFALIATLVYALF) form a helical membrane-spanning segment. Over 46–201 (RNVHQNIHPE…GGLFWMFRIR (156 aa)) the chain is Cytoplasmic. Residues 87-130 (CPICLHQASFPVETNCGHLFCGACIIAYWRYGSWLGAISCPICR) form an RING-type zinc finger. The chain crosses the membrane as a helical span at residues 202 to 222 (IILCLMGAFFYLISPLDFVPE). Residue Ala223 is a topological domain, lumenal. A helical transmembrane segment spans residues 224 to 244 (LFGILGFLDDFFVIFLLLIYI). The Cytoplasmic segment spans residues 245–258 (SIMYREVITQRLTR).

As to quaternary structure, (Microbial infection) Interacts with human cytomegalovirus protein NEC2/UL50; this interaction promotes of UBA7 ubiquitination and subsequent proteasomal degradation. Constitutively associated with the ERLIN1/ERLIN 2 complex. Interacts with activated ITPR1. In terms of tissue distribution, expressed in the spinal cord.

The protein resides in the endoplasmic reticulum membrane. The catalysed reaction is S-ubiquitinyl-[E2 ubiquitin-conjugating enzyme]-L-cysteine + [acceptor protein]-L-lysine = [E2 ubiquitin-conjugating enzyme]-L-cysteine + N(6)-ubiquitinyl-[acceptor protein]-L-lysine.. It functions in the pathway protein modification; protein ubiquitination. Functionally, E3 ubiquitin-protein ligase that plays an essential role in stimulus-induced inositol 1,4,5-trisphosphate receptor type 1 (ITPR1) ubiquitination and degradation via the endoplasmic reticulum-associated degradation (ERAD) pathway. Also involved in ITPR1 turnover in resting cells. Selectively inhibits the TLR3-triggered innate immune response by promoting the 'Lys-48'-linked polyubiquitination and degradation of TLR3. The protein is E3 ubiquitin-protein ligase RNF170 (RNF170) of Homo sapiens (Human).